Consider the following 57-residue polypeptide: Protein YnaL (57 aa).

Residues 7 to 57 form a disordered region; sequence LQIPVPEPIPGDPVPVPDPIPRPQPMPDPPPDEEPIKLSHRERRSARIRAC. The span at 11 to 35 shows a compositional bias: pro residues; the sequence is VPEPIPGDPVPVPDPIPRPQPMPDP. Residues 46 to 57 show a composition bias toward basic residues; that stretch reads HRERRSARIRAC.

The chain is Protein YnaL from Escherichia coli (strain K12).